Here is a 408-residue protein sequence, read N- to C-terminus: NADH-quinone oxidoreductase subunit D (408 aa).

Belongs to the complex I 49 kDa subunit family. As to quaternary structure, NDH-1 is composed of 14 different subunits. Subunits NuoB, C, D, E, F, and G constitute the peripheral sector of the complex.

It is found in the cell inner membrane. The enzyme catalyses a quinone + NADH + 5 H(+)(in) = a quinol + NAD(+) + 4 H(+)(out). Its function is as follows. NDH-1 shuttles electrons from NADH, via FMN and iron-sulfur (Fe-S) centers, to quinones in the respiratory chain. The immediate electron acceptor for the enzyme in this species is believed to be ubiquinone. Couples the redox reaction to proton translocation (for every two electrons transferred, four hydrogen ions are translocated across the cytoplasmic membrane), and thus conserves the redox energy in a proton gradient. This Campylobacter jejuni subsp. jejuni serotype O:6 (strain 81116 / NCTC 11828) protein is NADH-quinone oxidoreductase subunit D.